Reading from the N-terminus, the 313-residue chain is Porphobilinogen deaminase (313 aa).

Cys-242 is modified (S-(dipyrrolylmethanemethyl)cysteine).

Belongs to the HMBS family. Monomer. Dipyrromethane serves as cofactor.

The enzyme catalyses 4 porphobilinogen + H2O = hydroxymethylbilane + 4 NH4(+). Its pathway is porphyrin-containing compound metabolism; protoporphyrin-IX biosynthesis; coproporphyrinogen-III from 5-aminolevulinate: step 2/4. Tetrapolymerization of the monopyrrole PBG into the hydroxymethylbilane pre-uroporphyrinogen in several discrete steps. The protein is Porphobilinogen deaminase of Pseudomonas aeruginosa (strain UCBPP-PA14).